The sequence spans 718 residues: DNA ligase (718 aa).

Residues 44-48 (DADYD), 93-94 (SL), and Glu127 each bind NAD(+). The active-site N6-AMP-lysine intermediate is Lys129. Arg150, Glu186, Lys302, and Lys326 together coordinate NAD(+). Zn(2+) contacts are provided by Cys432, Cys435, Cys456, and Cys462. The BRCT domain occupies 640–718 (TAGSPVAGKT…EDQWLALISG (79 aa)).

The protein belongs to the NAD-dependent DNA ligase family. LigA subfamily. Mg(2+) is required as a cofactor. Mn(2+) serves as cofactor.

The enzyme catalyses NAD(+) + (deoxyribonucleotide)n-3'-hydroxyl + 5'-phospho-(deoxyribonucleotide)m = (deoxyribonucleotide)n+m + AMP + beta-nicotinamide D-nucleotide.. Functionally, DNA ligase that catalyzes the formation of phosphodiester linkages between 5'-phosphoryl and 3'-hydroxyl groups in double-stranded DNA using NAD as a coenzyme and as the energy source for the reaction. It is essential for DNA replication and repair of damaged DNA. This chain is DNA ligase, found in Rhizobium johnstonii (strain DSM 114642 / LMG 32736 / 3841) (Rhizobium leguminosarum bv. viciae).